A 686-amino-acid polypeptide reads, in one-letter code: Cadmium, zinc and cobalt-transporting ATPase (686 aa).

The HMA domain maps to 1–62 (MQEYHIHNLD…FIKQNEPHLS (62 aa)). The Cytoplasmic segment spans residues 1-72 (MQEYHIHNLD…LSFKEATEKP (72 aa)). Cd(2+)-binding residues include Cys-11 and Cys-14. Residues Cys-11 and Cys-14 each contribute to the Co(2+) site. Residues Cys-11 and Cys-14 each contribute to the Zn(2+) site. A helical membrane pass occupies residues 73 to 92 (LSFTPLIITIMVFLGAILIL). Residues 93–102 (HLNPSPLIEK) are Extracellular-facing. Residues 103 to 124 (AMFFVLALVYLVSGKDVILGAF) form a helical membrane-spanning segment. Residues 125 to 131 (RGLRKGQ) are Cytoplasmic-facing. A helical membrane pass occupies residues 132–151 (FFDENALMLIATIAAFFVGA). Topologically, residues 152-154 (YEE) are extracellular. Residues 155 to 174 (SVSIMVFYSAGEFLQKLAVS) form a helical membrane-spanning segment. Over 175 to 308 (RSKKSLKALV…ITKFSRYYTP (134 aa)) the chain is Cytoplasmic. Residues 309–327 (SVLFIALMIAVLPPLFSMG) traverse the membrane as a helical segment. Residues 328–332 (SFDEW) are Extracellular-facing. Residues 333–350 (IYRGLVALMVSCPCALVI) traverse the membrane as a helical segment. The Cytoplasmic segment spans residues 351–635 (SVPLGYFGGV…VLAIAKKTKS (285 aa)). Catalysis depends on Asp-388, which acts as the 4-aspartylphosphate intermediate. 2 residues coordinate Mg(2+): Asp-583 and Asp-587. A helical membrane pass occupies residues 636–657 (IIWQNILFALGIKAVFIVLGLM). The Extracellular segment spans residues 658-665 (GVASLWEA). A helical membrane pass occupies residues 666–681 (VFGDVGVTLLALANSM). At 682–686 (RAMRA) the chain is on the cytoplasmic side.

It belongs to the cation transport ATPase (P-type) (TC 3.A.3) family. Type IB subfamily.

The protein resides in the cell membrane. The catalysed reaction is Zn(2+)(in) + ATP + H2O = Zn(2+)(out) + ADP + phosphate + H(+). It catalyses the reaction Cd(2+)(in) + ATP + H2O = Cd(2+)(out) + ADP + phosphate + H(+). Couples the hydrolysis of ATP with the transport of cadmium, zinc and cobalt out of the cell. This ion efflux may influence the activity of urease, which is essential for the survival of the bacterium in the gastric environment. The polypeptide is Cadmium, zinc and cobalt-transporting ATPase (cadA) (Helicobacter pylori (strain ATCC 700392 / 26695) (Campylobacter pylori)).